Here is an 826-residue protein sequence, read N- to C-terminus: U-box domain-containing protein 4 (826 aa).

Residues 172–204 (RSNQEILIEAVALERQKEMAEQSENNAEVEFLD) adopt a coiled-coil conformation. Residues 229 to 303 (AILADFFCPL…ANWCETNDVK (75 aa)) enclose the U-box domain. Positions 330–501 (GADVSARKVS…TRRDLSDFSP (172 aa)) are disordered. Residues 347–360 (ASSSETGKPSFSSR) are compositionally biased toward polar residues. Positions 391-414 (DARRGSLNDFEDRSNDSRELRTDA) are enriched in basic and acidic residues. Residue S396 is modified to Phosphoserine. The segment covering 416–428 (GRSSVSSTTRGSV) has biased composition (low complexity). Over residues 492-501 (TRRDLSDFSP) the composition is skewed to basic and acidic residues. 7 ARM repeats span residues 530–570 (NETR…LLAK), 573–612 (MDNR…NLSI), 614–653 (DNNK…SLSV), 655–694 (EENK…NLSI), 696–734 (QENK…NLAT), 736–775 (PEGR…QLST), and 778–817 (GRFC…YFRN).

It catalyses the reaction S-ubiquitinyl-[E2 ubiquitin-conjugating enzyme]-L-cysteine + [acceptor protein]-L-lysine = [E2 ubiquitin-conjugating enzyme]-L-cysteine + N(6)-ubiquitinyl-[acceptor protein]-L-lysine.. It participates in protein modification; protein ubiquitination. In terms of biological role, functions as an E3 ubiquitin ligase. The polypeptide is U-box domain-containing protein 4 (PUB4) (Arabidopsis thaliana (Mouse-ear cress)).